The sequence spans 517 residues: AAA ATPase forming ring-shaped complexes (517 aa).

Residues 25–53 are a coiled coil; it reads ARNAKLVELLQASRTKLEEINGRLEALAE. 233–238 lines the ATP pocket; the sequence is GNGKTL.

This sequence belongs to the AAA ATPase family. In terms of assembly, homohexamer. Assembles into a hexameric ring structure.

This chain is AAA ATPase forming ring-shaped complexes, found in Corynebacterium jeikeium (strain K411).